The following is a 164-amino-acid chain: Endoribonuclease YbeY (164 aa).

Positions 132, 136, and 142 each coordinate Zn(2+).

This sequence belongs to the endoribonuclease YbeY family. Zn(2+) is required as a cofactor.

It localises to the cytoplasm. Functionally, single strand-specific metallo-endoribonuclease involved in late-stage 70S ribosome quality control and in maturation of the 3' terminus of the 16S rRNA. The sequence is that of Endoribonuclease YbeY from Clostridium kluyveri (strain NBRC 12016).